The chain runs to 107 residues: UPF0060 membrane protein PSHAa1175 (107 aa).

A run of 4 helical transmembrane segments spans residues 3-23 (IFGLFLITALAEIIGCYLPYL), 30-50 (SVWLLVPAALSLAIFAWLLSL), 60-80 (AAYGGVYIFMAILWLWAVDGI), and 84-104 (TWDLVGSGVALVGMAIIMFAP).

This sequence belongs to the UPF0060 family.

The protein resides in the cell inner membrane. This chain is UPF0060 membrane protein PSHAa1175, found in Pseudoalteromonas translucida (strain TAC 125).